A 526-amino-acid polypeptide reads, in one-letter code: Peptide chain release factor 3 (526 aa).

The 269-residue stretch at 9-277 (ERRRTFAIIS…AFAEYAPPPQ (269 aa)) folds into the tr-type G domain. Residues 18 to 25 (SHPDAGKT), 86 to 90 (DTPGH), and 140 to 143 (NKLD) each bind GTP.

This sequence belongs to the TRAFAC class translation factor GTPase superfamily. Classic translation factor GTPase family. PrfC subfamily.

The protein localises to the cytoplasm. Functionally, increases the formation of ribosomal termination complexes and stimulates activities of RF-1 and RF-2. It binds guanine nucleotides and has strong preference for UGA stop codons. It may interact directly with the ribosome. The stimulation of RF-1 and RF-2 is significantly reduced by GTP and GDP, but not by GMP. In Methylococcus capsulatus (strain ATCC 33009 / NCIMB 11132 / Bath), this protein is Peptide chain release factor 3.